A 216-amino-acid polypeptide reads, in one-letter code: UDP-N-acetylglucosamine transferase subunit ALG14 (216 aa).

The Lumenal portion of the chain corresponds to methionine 1–cysteine 3. Residues valine 4–valine 24 form a helical membrane-spanning segment. Residues valine 25–valine 216 are Cytoplasmic-facing.

This sequence belongs to the ALG14 family. In terms of assembly, forms with ALG13 the active heterodimeric UDP-N-acetylglucosamine transferase complex.

The protein localises to the endoplasmic reticulum membrane. In terms of biological role, part of the UDP-N-acetylglucosamine transferase complex that operates in the biosynthetic pathway of dolichol-linked oligosaccharides, the glycan precursors employed in protein asparagine (N)-glycosylation. The assembly of dolichol-linked oligosaccharides begins on the cytosolic side of the endoplasmic reticulum membrane and finishes in its lumen. The sequential addition of sugars to dolichol pyrophosphate produces dolichol-linked oligosaccharides containing fourteen sugars, including two GlcNAcs, nine mannoses and three glucoses. Once assembled, the oligosaccharides are transferred from the lipid to nascent proteins by oligosaccharyltransferases. Functions as a protein-membrane adapter recruiting ALG13 at the cytoplasmic face of the endoplasmic reticulum, where the complex catalyzes the second step of dolichol pyrophosphate biosynthesis, transferring a beta1,4-linked N-acetylglucosamine (GlcNAc) from UDP-GlcNAc to GlcNAc-pyrophosphatedolichol (Gn-PDol) to produce N,N'-diacetylchitobiosyl diphosphodolichol. N,N'-diacetylchitobiosyl diphosphodolichol is a substrate for ALG1, the following enzyme in the biosynthetic pathway. This Homo sapiens (Human) protein is UDP-N-acetylglucosamine transferase subunit ALG14.